An 87-amino-acid polypeptide reads, in one-letter code: Small ribosomal subunit protein uS17 (87 aa).

The protein belongs to the universal ribosomal protein uS17 family. As to quaternary structure, part of the 30S ribosomal subunit.

Functionally, one of the primary rRNA binding proteins, it binds specifically to the 5'-end of 16S ribosomal RNA. The polypeptide is Small ribosomal subunit protein uS17 (Syntrophobacter fumaroxidans (strain DSM 10017 / MPOB)).